A 204-amino-acid polypeptide reads, in one-letter code: Holliday junction branch migration complex subunit RuvA (204 aa).

Residues 1–63 (MIGKLSGKVD…EEHIHLYGFL (63 aa)) form a domain I region. The domain II stretch occupies residues 64 to 142 (TLEEKIFFNL…KISSGSAIIK (79 aa)). The interval 143-149 (ESLNIKN) is flexible linker. Positions 150–204 (ITPVASNEVIKALVNLGFSRFEAQNAVQGIITQNPEISIDELIKTALKNRNSNFS) are domain III.

It belongs to the RuvA family. In terms of assembly, homotetramer. Forms an RuvA(8)-RuvB(12)-Holliday junction (HJ) complex. HJ DNA is sandwiched between 2 RuvA tetramers; dsDNA enters through RuvA and exits via RuvB. An RuvB hexamer assembles on each DNA strand where it exits the tetramer. Each RuvB hexamer is contacted by two RuvA subunits (via domain III) on 2 adjacent RuvB subunits; this complex drives branch migration. In the full resolvosome a probable DNA-RuvA(4)-RuvB(12)-RuvC(2) complex forms which resolves the HJ.

It is found in the cytoplasm. The RuvA-RuvB-RuvC complex processes Holliday junction (HJ) DNA during genetic recombination and DNA repair, while the RuvA-RuvB complex plays an important role in the rescue of blocked DNA replication forks via replication fork reversal (RFR). RuvA specifically binds to HJ cruciform DNA, conferring on it an open structure. The RuvB hexamer acts as an ATP-dependent pump, pulling dsDNA into and through the RuvAB complex. HJ branch migration allows RuvC to scan DNA until it finds its consensus sequence, where it cleaves and resolves the cruciform DNA. In Rickettsia rickettsii (strain Iowa), this protein is Holliday junction branch migration complex subunit RuvA.